The sequence spans 740 residues: Leucine-rich repeat neuronal protein 4 (740 aa).

A signal peptide spans 1–18; sequence MRQTLPLLLLTVLRPSWA. The Extracellular segment spans residues 19–679; it reads DPPQEKVPLF…PCAAFTTKPS (661 aa). N-linked (GlcNAc...) asparagine glycosylation occurs at Asn-42. LRR repeat units lie at residues 51–74, 75–97, 98–123, 125–144, 145–168, 174–197, 203–226, 228–251, 253–276, and 277–300; these read LPAA…GCLP, RTLR…ELGH, LEQL…GPAG, HTLD…TGPA, LSSL…AFAC, LLNL…AFAG, LVTL…WIRD, PKLT…IFKM, PNLQ…IFQD, and TPHL…TLDS. An N-linked (GlcNAc...) asparagine glycan is attached at Asn-176. N-linked (GlcNAc...) asparagine glycans are attached at residues Asn-289, Asn-379, and Asn-442. The tract at residues 389-517 is disordered; sequence VAPSAAPATR…QAPNPSLSEG (129 aa). Polar residues-rich tracts occupy residues 430–454 and 490–514; these read APST…STTR and WDRS…NPSL. In terms of domain architecture, Fibronectin type-III spans 579 to 679; sequence IPDPPRLQGV…PCAAFTTKPS (101 aa). Asn-622 is a glycosylation site (N-linked (GlcNAc...) asparagine). Residues 680–700 form a helical membrane-spanning segment; sequence FALLLSGLCAASGLLLASTVV. Residues 701-740 are Cytoplasmic-facing; sequence LSACLCRRGQTLGLQRCDTHLVAYKNPAFDDYPLGLQTVS.

It is found in the membrane. Its function is as follows. May play an important role in hippocampus-dependent long-lasting memory. This chain is Leucine-rich repeat neuronal protein 4 (LRRN4), found in Homo sapiens (Human).